Here is an 824-residue protein sequence, read N- to C-terminus: MEEKYVPSAVEEKWQGYWAEHKSFKANEDPSRKKYYLLEMFPYPSGKIHMGHVRNYSIGDVIARFKRMQGYNVLHPMGWDAFGMPAENAAIQHKSHPAKWTYENIAYMRGQLKTLGLSYDWDRELATCDLDYYKWEQRIFLEMYKKGLAYKKSSAVNWCPKCETVLANEQVEDGCCWRCDSPVQQKELEQWSFRITNYAQELLDDTYKLTGWPERVLTMQRNWIGRSTGCEIDFPLESGLGKIKVFTTRQDTLFGATFMSLAAEHPMALDLAGDAQKAEVAAFIDKVKKTDRIKRGAEDLEKEGVFTGSYCINPVTNTKMPIYLANFVLMDYGTGAVMAVPTHDQRDFEFAKKYNLPLKVVIQPEGETLDPATMTEAYTAEGIMVNSGRFDGMGNADAKEAIADFLEKEGIGKKTVNFRLRDWGISRQRYWGNPIPVINCDLCGVVAVPEADLPVVLPMDAEFTGEGGNPLARVDSFTTCTCPQCGETARRETDTMDTFVQSSWYFLRYCSPKFSAGPLDREKVEAWMPVDQYIGGIEHAVLHLLYARFFTKVLRDLGYCNVDEPFSNLLTQGMVIKDGAKMSKSKGNVVDPNALIERYGADTARLFSLFAAPPEKDLDWSDQGVDGSYRFLNRVWRLVYDVLPVIGDAGAVNPGELGAEAKKLRRAVHKTIKKVSEDVEERFHFNTAIAAVMELVNAIQAFSAKDAPENVAVVREAVESVVRLLAPFVPNFAEELWFQLGHASVLEAAGWPGYDAAAVVDEEVTVVIQVNGKLRSKLTVAPDAKEEEVRAQALADDKIKPYLEGKDVKKVVYVPGKLVSIVVA.

Positions 42 to 52 (PYPSGKIHMGH) match the 'HIGH' region motif. The 'KMSKS' region motif lies at 581-585 (KMSKS). Residue Lys-584 coordinates ATP.

Belongs to the class-I aminoacyl-tRNA synthetase family.

The protein resides in the cytoplasm. It carries out the reaction tRNA(Leu) + L-leucine + ATP = L-leucyl-tRNA(Leu) + AMP + diphosphate. The sequence is that of Leucine--tRNA ligase from Citrifermentans bemidjiense (strain ATCC BAA-1014 / DSM 16622 / JCM 12645 / Bem) (Geobacter bemidjiensis).